The following is a 479-amino-acid chain: Aspartyl/glutamyl-tRNA(Asn/Gln) amidotransferase subunit B (479 aa).

Belongs to the GatB/GatE family. GatB subfamily. Heterotrimer of A, B and C subunits.

It catalyses the reaction L-glutamyl-tRNA(Gln) + L-glutamine + ATP + H2O = L-glutaminyl-tRNA(Gln) + L-glutamate + ADP + phosphate + H(+). It carries out the reaction L-aspartyl-tRNA(Asn) + L-glutamine + ATP + H2O = L-asparaginyl-tRNA(Asn) + L-glutamate + ADP + phosphate + 2 H(+). In terms of biological role, allows the formation of correctly charged Asn-tRNA(Asn) or Gln-tRNA(Gln) through the transamidation of misacylated Asp-tRNA(Asn) or Glu-tRNA(Gln) in organisms which lack either or both of asparaginyl-tRNA or glutaminyl-tRNA synthetases. The reaction takes place in the presence of glutamine and ATP through an activated phospho-Asp-tRNA(Asn) or phospho-Glu-tRNA(Gln). The chain is Aspartyl/glutamyl-tRNA(Asn/Gln) amidotransferase subunit B from Streptococcus pyogenes serotype M1.